We begin with the raw amino-acid sequence, 397 residues long: Stearoyl-[acyl-carrier-protein] 9-desaturase, chloroplastic (397 aa).

Residues 1-33 constitute a chloroplast transit peptide; sequence MALNFNAIASKSQKLPCFALPPKATLRSPKFSM. Positions 138, 176, 179, 229, 262, and 265 each coordinate Fe cation.

This sequence belongs to the fatty acid desaturase type 2 family. As to quaternary structure, homodimer. It depends on Fe(2+) as a cofactor.

The protein localises to the plastid. It localises to the chloroplast. The enzyme catalyses octadecanoyl-[ACP] + 2 reduced [2Fe-2S]-[ferredoxin] + O2 + 2 H(+) = (9Z)-octadecenoyl-[ACP] + 2 oxidized [2Fe-2S]-[ferredoxin] + 2 H2O. Its pathway is lipid metabolism; fatty acid metabolism. Its function is as follows. Converts stearoyl-ACP to oleoyl-ACP by introduction of a cis double bond between carbons 9 and 10 of the acyl chain. This chain is Stearoyl-[acyl-carrier-protein] 9-desaturase, chloroplastic, found in Gossypium hirsutum (Upland cotton).